A 303-amino-acid chain; its full sequence is Bifunctional protein FolD 2 (303 aa).

Residues 169–171, S194, and I235 each bind NADP(+); that span reads GRS.

This sequence belongs to the tetrahydrofolate dehydrogenase/cyclohydrolase family. Homodimer.

The enzyme catalyses (6R)-5,10-methylene-5,6,7,8-tetrahydrofolate + NADP(+) = (6R)-5,10-methenyltetrahydrofolate + NADPH. It catalyses the reaction (6R)-5,10-methenyltetrahydrofolate + H2O = (6R)-10-formyltetrahydrofolate + H(+). It participates in one-carbon metabolism; tetrahydrofolate interconversion. Catalyzes the oxidation of 5,10-methylenetetrahydrofolate to 5,10-methenyltetrahydrofolate and then the hydrolysis of 5,10-methenyltetrahydrofolate to 10-formyltetrahydrofolate. The polypeptide is Bifunctional protein FolD 2 (Ectopseudomonas mendocina (strain ymp) (Pseudomonas mendocina)).